The sequence spans 132 residues: Large-conductance mechanosensitive channel (132 aa).

A run of 2 helical transmembrane segments spans residues 14–34 (VIDL…VSSL) and 67–87 (GNFI…FMFV).

This sequence belongs to the MscL family. In terms of assembly, homopentamer.

It is found in the cell membrane. Functionally, channel that opens in response to stretch forces in the membrane lipid bilayer. May participate in the regulation of osmotic pressure changes within the cell. This chain is Large-conductance mechanosensitive channel, found in Bacillus anthracis (strain A0248).